The sequence spans 756 residues: ATP-dependent DNA helicase Hel308 (756 aa).

ATP is bound by residues glutamine 29 and 47 to 54 (SATASGKT). In terms of domain architecture, Helicase ATP-binding spans 34 to 201 (RAGLLNGENI…WLNAKLVKSD (168 aa)). The DEAH box motif lies at 146–149 (DEIH). The Helicase C-terminal domain occupies 233-435 (SLINLTVDTL…PTSLKFHTLS (203 aa)).

The protein belongs to the helicase family. Hel308 subfamily. Monomer.

It carries out the reaction Couples ATP hydrolysis with the unwinding of duplex DNA by translocating in the 3'-5' direction.. It catalyses the reaction ATP + H2O = ADP + phosphate + H(+). In terms of biological role, DNA-dependent ATPase and 3'-5' DNA helicase that may be involved in repair of stalled replication forks. This is ATP-dependent DNA helicase Hel308 from Caldivirga maquilingensis (strain ATCC 700844 / DSM 13496 / JCM 10307 / IC-167).